A 68-amino-acid polypeptide reads, in one-letter code: uncharacterized protein (68 aa).

This is an uncharacterized protein from Invertebrate iridescent virus 3 (IIV-3).